The sequence spans 150 residues: 3-hydroxyacyl-[acyl-carrier-protein] dehydratase FabZ (150 aa).

H54 is an active-site residue.

The protein belongs to the thioester dehydratase family. FabZ subfamily.

It is found in the cytoplasm. The enzyme catalyses a (3R)-hydroxyacyl-[ACP] = a (2E)-enoyl-[ACP] + H2O. Functionally, involved in unsaturated fatty acids biosynthesis. Catalyzes the dehydration of short chain beta-hydroxyacyl-ACPs and long chain saturated and unsaturated beta-hydroxyacyl-ACPs. This Aliivibrio fischeri (strain ATCC 700601 / ES114) (Vibrio fischeri) protein is 3-hydroxyacyl-[acyl-carrier-protein] dehydratase FabZ.